Consider the following 180-residue polypeptide: Dephospho-CoA kinase (180 aa).

The region spanning 2–180 (VIGVTGKIGT…VMKLVWEKRE (179 aa)) is the DPCK domain. 10–15 (GTGKST) is an ATP binding site.

It belongs to the CoaE family.

The protein localises to the cytoplasm. The catalysed reaction is 3'-dephospho-CoA + ATP = ADP + CoA + H(+). The protein operates within cofactor biosynthesis; coenzyme A biosynthesis; CoA from (R)-pantothenate: step 5/5. Functionally, catalyzes the phosphorylation of the 3'-hydroxyl group of dephosphocoenzyme A to form coenzyme A. This Thermotoga maritima (strain ATCC 43589 / DSM 3109 / JCM 10099 / NBRC 100826 / MSB8) protein is Dephospho-CoA kinase.